We begin with the raw amino-acid sequence, 358 residues long: Probable arabinan endo-1,5-alpha-L-arabinosidase B (358 aa).

A signal peptide spans 1–16 (MVLVATLFSLFTVSLC). Catalysis depends on D39, which acts as the Proton acceptor. N194 is a glycosylation site (N-linked (GlcNAc...) asparagine). The interval 202–227 (HLAKHPKTERVNSQDQNPDPLCRDSS) is disordered. The active-site Proton donor is the E233.

This sequence belongs to the glycosyl hydrolase 43 family.

The protein localises to the secreted. It catalyses the reaction Endohydrolysis of (1-&gt;5)-alpha-arabinofuranosidic linkages in (1-&gt;5)-arabinans.. It participates in glycan metabolism; L-arabinan degradation. Functionally, endo-1,5-alpha-L-arabinanase involved in degradation of pectin. Its preferred substrate is linear 1,5-alpha-L-arabinan. The chain is Probable arabinan endo-1,5-alpha-L-arabinosidase B (abnB) from Aspergillus flavus (strain ATCC 200026 / FGSC A1120 / IAM 13836 / NRRL 3357 / JCM 12722 / SRRC 167).